Here is a 490-residue protein sequence, read N- to C-terminus: UDP-N-acetylmuramyl-tripeptide synthetase (490 aa).

113–119 is an ATP binding site; sequence GTDGKTT. Residues 158–159, Ser-185, and Arg-193 contribute to the UDP-N-acetyl-alpha-D-muramoyl-L-alanyl-D-glutamate site; that span reads TT. Position 225 is an N6-carboxylysine (Lys-225).

The protein belongs to the MurCDEF family. MurE subfamily. In terms of processing, carboxylation is probably crucial for Mg(2+) binding and, consequently, for the gamma-phosphate positioning of ATP.

It is found in the cytoplasm. It functions in the pathway cell wall biogenesis; peptidoglycan biosynthesis. In terms of biological role, catalyzes the addition of an amino acid to the nucleotide precursor UDP-N-acetylmuramoyl-L-alanyl-D-glutamate (UMAG) in the biosynthesis of bacterial cell-wall peptidoglycan. In Deinococcus radiodurans (strain ATCC 13939 / DSM 20539 / JCM 16871 / CCUG 27074 / LMG 4051 / NBRC 15346 / NCIMB 9279 / VKM B-1422 / R1), this protein is UDP-N-acetylmuramyl-tripeptide synthetase.